Consider the following 136-residue polypeptide: Urease subunit beta (136 aa).

This sequence belongs to the urease beta subunit family. Heterotrimer of UreA (gamma), UreB (beta) and UreC (alpha) subunits. Three heterotrimers associate to form the active enzyme.

Its subcellular location is the cytoplasm. The enzyme catalyses urea + 2 H2O + H(+) = hydrogencarbonate + 2 NH4(+). It participates in nitrogen metabolism; urea degradation; CO(2) and NH(3) from urea (urease route): step 1/1. The protein is Urease subunit beta of Staphylococcus aureus (strain Mu3 / ATCC 700698).